The chain runs to 574 residues: Craniofacial development protein 2 (574 aa).

Composition is skewed to basic and acidic residues over residues 1–16, 23–37, 45–55, 86–111, and 134–172; these read MEEV…KAED, ECHE…KEDE, EQTKGIKRKAE, SEKE…KEDE, and TGEE…DRQQ. Disordered regions lie at residues 1–222 and 488–574; these read MEEV…PAVD and TRPF…SGVF. The segment covering 199 to 208 has biased composition (polar residues); that stretch reads KTGTNASSKN. The interval 493-572 is hydrophilic; that stretch reads GTNEADDTSE…AVPSLPAGSG (80 aa). Positions 502 to 516 are enriched in basic and acidic residues; that stretch reads EESKPSSEQKGKEKP. A compositionally biased stretch (low complexity) spans 518 to 528; sequence ASVPSAVSSVP.

It is found in the cytoplasm. The protein localises to the nucleus. The chain is Craniofacial development protein 2 (CFDP2) from Tragulus javanicus (Lesser Malay chevrotain).